Here is a 662-residue protein sequence, read N- to C-terminus: UPF0313 protein CPF_1407 (662 aa).

The Radical SAM core domain occupies 296 to 567 (AIEEVKFSIV…AMQRALLQFK (272 aa)). The [4Fe-4S] cluster site is built by Cys310, Cys314, and Cys317. A disordered region spans residues 596–662 (IRDKNSFGKG…QRSSKGKKRR (67 aa)). Basic and acidic residues predominate over residues 618-632 (SRNENSGRRESEDKK). The segment covering 633–644 (RSSHSKKQRGNK) has biased composition (basic residues).

This sequence belongs to the UPF0313 family. Requires [4Fe-4S] cluster as cofactor.

The chain is UPF0313 protein CPF_1407 from Clostridium perfringens (strain ATCC 13124 / DSM 756 / JCM 1290 / NCIMB 6125 / NCTC 8237 / Type A).